Reading from the N-terminus, the 292-residue chain is Putative pyruvate, phosphate dikinase regulatory protein (292 aa).

155 to 162 serves as a coordination point for ADP; sequence GVSRSSKT.

Belongs to the pyruvate, phosphate/water dikinase regulatory protein family. PDRP subfamily.

The enzyme catalyses N(tele)-phospho-L-histidyl/L-threonyl-[pyruvate, phosphate dikinase] + ADP = N(tele)-phospho-L-histidyl/O-phospho-L-threonyl-[pyruvate, phosphate dikinase] + AMP + H(+). It catalyses the reaction N(tele)-phospho-L-histidyl/O-phospho-L-threonyl-[pyruvate, phosphate dikinase] + phosphate + H(+) = N(tele)-phospho-L-histidyl/L-threonyl-[pyruvate, phosphate dikinase] + diphosphate. In terms of biological role, bifunctional serine/threonine kinase and phosphorylase involved in the regulation of the pyruvate, phosphate dikinase (PPDK) by catalyzing its phosphorylation/dephosphorylation. This chain is Putative pyruvate, phosphate dikinase regulatory protein, found in Acidiphilium cryptum (strain JF-5).